A 472-amino-acid polypeptide reads, in one-letter code: Regulator of G-protein signaling 6 (472 aa).

The 76-residue stretch at lysine 40–alanine 115 folds into the DEP domain. In terms of domain architecture, G protein gamma spans isoleucine 261 to valine 330. In terms of domain architecture, RGS spans serine 336–phenylalanine 441.

In terms of assembly, interacts with GNB5. Interacts with RGS7BP, leading to regulate the subcellular location of the heterodimer formed with GNB5. Interacts with GNAI1.

It is found in the cytoplasm. It localises to the cytosol. The protein localises to the membrane. The protein resides in the nucleus. Its subcellular location is the cell membrane. Regulates G protein-coupled receptor signaling cascades. Inhibits signal transduction by increasing the GTPase activity of G protein alpha subunits, thereby driving them into their inactive GDP-bound form. The RGS6/GNB5 dimer enhances GNAO1 GTPase activity. In Homo sapiens (Human), this protein is Regulator of G-protein signaling 6 (RGS6).